A 151-amino-acid chain; its full sequence is S-protein homolog 1 (151 aa).

Positions 1–18 (MNCIKQFLLAICFSLALT) are cleaved as a signal peptide.

The protein belongs to the plant self-incompatibility (S1) protein family. In terms of tissue distribution, restricted to floral tissues.

The protein localises to the secreted. The protein is S-protein homolog 1 of Arabidopsis thaliana (Mouse-ear cress).